Consider the following 346-residue polypeptide: Putative D-threonate 4-phosphate dehydrogenase (346 aa).

Substrate contacts are provided by His141 and Thr142. A divalent metal cation is bound by residues His171, His215, and His270. Substrate contacts are provided by Lys278 and Arg296.

It belongs to the PdxA family. PdxA2 subfamily. As to quaternary structure, homodimer. A divalent metal cation is required as a cofactor.

It carries out the reaction 4-O-phospho-D-threonate + NAD(+) = dihydroxyacetone phosphate + CO2 + NADH. Its function is as follows. Catalyzes the NAD-dependent oxidation and subsequent decarboxylation of D-threonate 4-phosphate to produce dihydroxyacetone phosphate (DHAP). The polypeptide is Putative D-threonate 4-phosphate dehydrogenase (Cutibacterium acnes (strain DSM 16379 / KPA171202) (Propionibacterium acnes)).